The chain runs to 160 residues: SsrA-binding protein (160 aa).

The tract at residues 136-160 is disordered; the sequence is KRDTVRERDSNRELQRAVRNKGKED.

The protein belongs to the SmpB family.

It is found in the cytoplasm. Functionally, required for rescue of stalled ribosomes mediated by trans-translation. Binds to transfer-messenger RNA (tmRNA), required for stable association of tmRNA with ribosomes. tmRNA and SmpB together mimic tRNA shape, replacing the anticodon stem-loop with SmpB. tmRNA is encoded by the ssrA gene; the 2 termini fold to resemble tRNA(Ala) and it encodes a 'tag peptide', a short internal open reading frame. During trans-translation Ala-aminoacylated tmRNA acts like a tRNA, entering the A-site of stalled ribosomes, displacing the stalled mRNA. The ribosome then switches to translate the ORF on the tmRNA; the nascent peptide is terminated with the 'tag peptide' encoded by the tmRNA and targeted for degradation. The ribosome is freed to recommence translation, which seems to be the essential function of trans-translation. The polypeptide is SsrA-binding protein (Pseudomonas putida (strain W619)).